Reading from the N-terminus, the 635-residue chain is Threonine--tRNA ligase (635 aa).

In terms of domain architecture, TGS spans 1–61; it reads MTVVRLPDGT…ETDSDLVLIT (61 aa). The catalytic stretch occupies residues 242-533; sequence DHRKLGKQLD…LIEHHAGALP (292 aa). Cys333, His384, and His510 together coordinate Zn(2+).

It belongs to the class-II aminoacyl-tRNA synthetase family. As to quaternary structure, homodimer. Requires Zn(2+) as cofactor.

The protein resides in the cytoplasm. It carries out the reaction tRNA(Thr) + L-threonine + ATP = L-threonyl-tRNA(Thr) + AMP + diphosphate + H(+). Catalyzes the attachment of threonine to tRNA(Thr) in a two-step reaction: L-threonine is first activated by ATP to form Thr-AMP and then transferred to the acceptor end of tRNA(Thr). Also edits incorrectly charged L-seryl-tRNA(Thr). This Nitrosomonas europaea (strain ATCC 19718 / CIP 103999 / KCTC 2705 / NBRC 14298) protein is Threonine--tRNA ligase.